A 462-amino-acid polypeptide reads, in one-letter code: uncharacterized protein (462 aa).

A divalent metal cation-binding residues include Asp-12, His-14, Asp-48, Asn-81, His-179, and His-202. A coiled-coil region spans residues 258-291; sequence ESAETKAFLNEKEREAEEKLSDAVAELAQDAEVK.

It belongs to the metallophosphoesterase superfamily. A divalent metal cation serves as cofactor.

This is an uncharacterized protein from Bacillus subtilis (strain 168).